A 507-amino-acid chain; its full sequence is Fumarate hydratase, mitochondrial (507 aa).

Residues 1 to 41 (MYRALRLLARSRRLLRVPSAGAAVSGEATTLPRCAPNVARM) constitute a mitochondrion transit peptide. N6-acetyllysine; alternate occurs at positions 58, 63, and 77. 3 positions are modified to N6-succinyllysine; alternate: Lys-58, Lys-63, and Lys-77. The residue at position 82 (Thr-82) is a Phosphothreonine. N6-acetyllysine; alternate occurs at positions 112 and 119. Lys-112 and Lys-119 each carry N6-succinyllysine; alternate. Residues 142–144 (SGT), 173–176 (HPND), and 183–185 (SSN) each bind substrate. Lys-210 is modified (N6-acetyllysine). Lys-220 carries the post-translational modification N6-acetyllysine; alternate. The residue at position 220 (Lys-220) is an N6-succinyllysine; alternate. Thr-231 is a binding site for substrate. The active-site Proton donor/acceptor is the His-232. Position 233 is a phosphothreonine (Thr-233). Position 289 is an N6-acetyllysine; alternate (Lys-289). Lys-289 carries the post-translational modification N6-succinyllysine; alternate. Ser-362 is a catalytic residue. Substrate is bound by residues Ser-363 and 368-370 (KVN). Position 363 is a phosphoserine (Ser-363). 2 positions are modified to N6-succinyllysine: Lys-464 and Lys-470. Residue Lys-499 is modified to N6-acetyllysine.

This sequence belongs to the class-II fumarase/aspartase family. Fumarase subfamily. Homotetramer. Interacts with H2AZ1. In terms of processing, phosphorylation at Thr-233 by PRKDC in response to DNA damage promotes translocation to the nucleus and recruitment to DNA double-strand breaks (DSBs).

It is found in the mitochondrion. Its subcellular location is the cytoplasm. The protein localises to the cytosol. It localises to the nucleus. The protein resides in the chromosome. The catalysed reaction is (S)-malate = fumarate + H2O. It participates in carbohydrate metabolism; tricarboxylic acid cycle; (S)-malate from fumarate: step 1/1. In terms of biological role, catalyzes the reversible stereospecific interconversion of fumarate to L-malate. Experiments in different species have demonstrated that specific isoforms of this protein act in defined pathways and favor one direction over the other. Functionally, catalyzes the hydration of fumarate to L-malate in the tricarboxylic acid (TCA) cycle to facilitate a transition step in the production of energy in the form of NADH. Its function is as follows. Catalyzes the dehydration of L-malate to fumarate. Fumarate metabolism in the cytosol plays a role during urea cycle and arginine metabolism; fumarate being a by-product of the urea cycle and amino-acid catabolism. Also plays a role in DNA repair by promoting non-homologous end-joining (NHEJ). In response to DNA damage and phosphorylation by PRKDC, translocates to the nucleus and accumulates at DNA double-strand breaks (DSBs): acts by catalyzing formation of fumarate, an inhibitor of KDM2B histone demethylase activity, resulting in enhanced dimethylation of histone H3 'Lys-36' (H3K36me2). The chain is Fumarate hydratase, mitochondrial from Mus musculus (Mouse).